A 149-amino-acid chain; its full sequence is Transcription antitermination protein NusB (149 aa).

The protein belongs to the NusB family.

In terms of biological role, involved in transcription antitermination. Required for transcription of ribosomal RNA (rRNA) genes. Binds specifically to the boxA antiterminator sequence of the ribosomal RNA (rrn) operons. This chain is Transcription antitermination protein NusB, found in Acinetobacter baumannii (strain AB307-0294).